The following is a 746-amino-acid chain: Exostosin-1 (746 aa).

Topologically, residues 1 to 5 (MQAKK) are cytoplasmic. A helical; Signal-anchor for type II membrane protein transmembrane segment spans residues 6 to 26 (RYFILLSAGSCLALLFYFGGV). Residues 27–746 (QFRASRSHSR…RKKYRDIERL (720 aa)) are Lumenal-facing. Asparagine 89 carries an N-linked (GlcNAc...) asparagine glycan. 2 cysteine pairs are disulfide-bonded: cysteine 98-cysteine 103 and cysteine 109-cysteine 152. A protein contacts are provided by leucine 166 and tyrosine 203. UDP contacts are provided by lysine 267, lysine 269, tyrosine 271, and arginine 280. Cysteine 298 and cysteine 312 are disulfide-bonded. Histidine 300 lines the a protein pocket. Tyrosine 319 and tyrosine 324 together coordinate UDP. Asparagine 330 carries an N-linked (GlcNAc...) asparagine glycan. Intrachain disulfides connect cysteine 334–cysteine 355 and cysteine 652–cysteine 704. UDP-binding residues include arginine 346 and glutamate 349.

This sequence belongs to the glycosyltransferase 47 family. In terms of assembly, part of the heparan sulfate polymerase, a dimeric complex composed of EXT1 and EXT2. Could also form homooligomeric complexes. Interacts with NDST1. N-glycosylated.

Its subcellular location is the golgi apparatus membrane. It is found in the golgi apparatus. It localises to the cis-Golgi network membrane. The protein resides in the endoplasmic reticulum membrane. It catalyses the reaction 3-O-{alpha-D-GlcNAc-[(1-&gt;4)-beta-D-GlcA-(1-&gt;4)-alpha-D-GlcNAc](n)-(1-&gt;4)-beta-D-GlcA-(1-&gt;3)-beta-D-Gal-(1-&gt;3)-beta-D-Gal-(1-&gt;4)-beta-D-Xyl}-L-seryl-[protein] + UDP-alpha-D-glucuronate = 3-O-{[(1-&gt;4)-beta-D-GlcA-(1-&gt;4)-alpha-D-GlcNAc](n+1)-(1-&gt;4)-beta-D-GlcA-(1-&gt;3)-beta-D-Gal-(1-&gt;3)-beta-D-Gal-(1-&gt;4)-beta-D-Xyl}-L-seryl-[protein] + UDP + H(+). Its pathway is protein modification; protein glycosylation. Glycosyltransferase forming with EXT2 the heterodimeric heparan sulfate polymerase which catalyzes the elongation of the heparan sulfate glycan backbone. Glycan backbone extension consists in the alternating transfer of (1-&gt;4)-beta-D-GlcA and (1-&gt;4)-alpha-D-GlcNAc residues from their respective UDP-sugar donors. Both EXT1 and EXT2 are required for the full activity of the polymerase since EXT1 bears the N-acetylglucosaminyl-proteoglycan 4-beta-glucuronosyltransferase activity within the complex while EXT2 carries the glucuronosyl-N-acetylglucosaminyl-proteoglycan 4-alpha-N-acetylglucosaminyltransferase activity. Heparan sulfate proteoglycans are ubiquitous components of the extracellular matrix and play an important role in tissue homeostasis and signaling. The protein is Exostosin-1 of Cricetulus griseus (Chinese hamster).